A 221-amino-acid polypeptide reads, in one-letter code: Keratin-associated protein 10-3 (221 aa).

18 repeat units span residues 26 to 30 (CCEPP), 31 to 35 (CCATS), 36 to 40 (CCAPA), 57 to 61 (CCQAA), 79 to 83 (CCQQS), 89 to 93 (CCTSS), 99 to 103 (CCVPV), 104 to 108 (CCKPV), 109 to 113 (CCVPV), 114 to 118 (CCKPV), 119 to 123 (CCKPI), 124 to 128 (CCVPV), 136 to 140 (CCQQS), 146 to 150 (CCTTS), 151 to 155 (CCRPS), 177 to 181 (CCAPA), 188 to 192 (CCRPA), and 210 to 214 (CCGLS). The segment at 26–214 (CCEPPCCATS…RLSSACCGLS (189 aa)) is 18 X 5 AA repeats of C-C-X(3).

The protein belongs to the KRTAP type 10 family. In terms of assembly, interacts with hair keratins. In terms of tissue distribution, restricted to a narrow region of the hair fiber cuticle, lying approximately 20 cell layers above the apex of the dermal papilla of the hair root; not detected in any other tissues.

Functionally, in the hair cortex, hair keratin intermediate filaments are embedded in an interfilamentous matrix, consisting of hair keratin-associated proteins (KRTAP), which are essential for the formation of a rigid and resistant hair shaft through their extensive disulfide bond cross-linking with abundant cysteine residues of hair keratins. The matrix proteins include the high-sulfur and high-glycine-tyrosine keratins. This chain is Keratin-associated protein 10-3 (KRTAP10-3), found in Homo sapiens (Human).